The chain runs to 334 residues: Holliday junction branch migration complex subunit RuvB (334 aa).

Positions 4–184 (ADRLIQPQIQ…FGIPLRLEFY (181 aa)) are large ATPase domain (RuvB-L). Residues R24, G65, K68, T69, T70, 131–133 (EDY), R174, Y184, and R221 each bind ATP. Residue T69 coordinates Mg(2+). The segment at 185-255 (NIKDLSTIVT…VAEHALDLLD (71 aa)) is small ATPAse domain (RuvB-S). The tract at residues 258–334 (SEGFDYMDRK…YQHFELIKPE (77 aa)) is head domain (RuvB-H). Positions 294, 313, and 318 each coordinate DNA.

This sequence belongs to the RuvB family. In terms of assembly, homohexamer. Forms an RuvA(8)-RuvB(12)-Holliday junction (HJ) complex. HJ DNA is sandwiched between 2 RuvA tetramers; dsDNA enters through RuvA and exits via RuvB. An RuvB hexamer assembles on each DNA strand where it exits the tetramer. Each RuvB hexamer is contacted by two RuvA subunits (via domain III) on 2 adjacent RuvB subunits; this complex drives branch migration. In the full resolvosome a probable DNA-RuvA(4)-RuvB(12)-RuvC(2) complex forms which resolves the HJ.

It is found in the cytoplasm. It catalyses the reaction ATP + H2O = ADP + phosphate + H(+). In terms of biological role, the RuvA-RuvB-RuvC complex processes Holliday junction (HJ) DNA during genetic recombination and DNA repair, while the RuvA-RuvB complex plays an important role in the rescue of blocked DNA replication forks via replication fork reversal (RFR). RuvA specifically binds to HJ cruciform DNA, conferring on it an open structure. The RuvB hexamer acts as an ATP-dependent pump, pulling dsDNA into and through the RuvAB complex. RuvB forms 2 homohexamers on either side of HJ DNA bound by 1 or 2 RuvA tetramers; 4 subunits per hexamer contact DNA at a time. Coordinated motions by a converter formed by DNA-disengaged RuvB subunits stimulates ATP hydrolysis and nucleotide exchange. Immobilization of the converter enables RuvB to convert the ATP-contained energy into a lever motion, pulling 2 nucleotides of DNA out of the RuvA tetramer per ATP hydrolyzed, thus driving DNA branch migration. The RuvB motors rotate together with the DNA substrate, which together with the progressing nucleotide cycle form the mechanistic basis for DNA recombination by continuous HJ branch migration. Branch migration allows RuvC to scan DNA until it finds its consensus sequence, where it cleaves and resolves cruciform DNA. This is Holliday junction branch migration complex subunit RuvB from Shewanella baltica (strain OS223).